Reading from the N-terminus, the 88-residue chain is MMTKTGLVLLFAFLLVFPVSSLPMDAEAGHARLEMDKRDAGNEAWTRLLKRYEENCGTEYCTSKIGCPGRCVCKEYNYNGEITRRCRA.

The first 21 residues, M1–S21, serve as a signal peptide directing secretion. The propeptide occupies L22–L49. 3 disulfide bridges follow: C56–C71, C61–C73, and C67–C86.

As to expression, expressed by the venom duct.

The protein localises to the secreted. This chain is Augerpeptide Hhe9a, found in Hastula hectica (Sea snail).